Consider the following 104-residue polypeptide: Large ribosomal subunit protein bL21 (104 aa).

This sequence belongs to the bacterial ribosomal protein bL21 family. Part of the 50S ribosomal subunit. Contacts protein L20.

Functionally, this protein binds to 23S rRNA in the presence of protein L20. This chain is Large ribosomal subunit protein bL21, found in Agrobacterium fabrum (strain C58 / ATCC 33970) (Agrobacterium tumefaciens (strain C58)).